We begin with the raw amino-acid sequence, 461 residues long: Ribosomal protein uS12 methylthiotransferase RimO (461 aa).

Positions 13–128 (PKVGFVSLGC…VMQHVHMHLP (116 aa)) constitute an MTTase N-terminal domain. 6 residues coordinate [4Fe-4S] cluster: Cys-22, Cys-58, Cys-87, Cys-159, Cys-163, and Cys-166. The Radical SAM core domain maps to 145-390 (LTPRHYAYLK…MEVAEEVSAK (246 aa)). The TRAM domain occupies 393 to 461 (AKKVGKTLKV…ADGHDLWGEV (69 aa)).

It belongs to the methylthiotransferase family. RimO subfamily. Requires [4Fe-4S] cluster as cofactor.

The protein resides in the cytoplasm. The catalysed reaction is L-aspartate(89)-[ribosomal protein uS12]-hydrogen + (sulfur carrier)-SH + AH2 + 2 S-adenosyl-L-methionine = 3-methylsulfanyl-L-aspartate(89)-[ribosomal protein uS12]-hydrogen + (sulfur carrier)-H + 5'-deoxyadenosine + L-methionine + A + S-adenosyl-L-homocysteine + 2 H(+). Functionally, catalyzes the methylthiolation of an aspartic acid residue of ribosomal protein uS12. In Paraburkholderia xenovorans (strain LB400), this protein is Ribosomal protein uS12 methylthiotransferase RimO.